The chain runs to 188 residues: Holliday junction branch migration complex subunit RuvA (188 aa).

Residues 1 to 64 form a domain I region; that stretch reads MIAGISGRVL…QDGITLYGFS (64 aa). A domain II region spans residues 65 to 143; sequence NERKKELFLS…SAGIKDMRIY (79 aa). Residue tyrosine 143 is a region of interest, flexible linker. The domain III stretch occupies residues 143 to 188; sequence YHESLEALISLGYPEKQAREAVKHVYREGMKTSELIKEALKFLSQR.

It belongs to the RuvA family. As to quaternary structure, homotetramer. Forms an RuvA(8)-RuvB(12)-Holliday junction (HJ) complex. HJ DNA is sandwiched between 2 RuvA tetramers; dsDNA enters through RuvA and exits via RuvB. An RuvB hexamer assembles on each DNA strand where it exits the tetramer. Each RuvB hexamer is contacted by two RuvA subunits (via domain III) on 2 adjacent RuvB subunits; this complex drives branch migration. In the full resolvosome a probable DNA-RuvA(4)-RuvB(12)-RuvC(2) complex forms which resolves the HJ.

Its subcellular location is the cytoplasm. Functionally, the RuvA-RuvB-RuvC complex processes Holliday junction (HJ) DNA during genetic recombination and DNA repair, while the RuvA-RuvB complex plays an important role in the rescue of blocked DNA replication forks via replication fork reversal (RFR). RuvA specifically binds to HJ cruciform DNA, conferring on it an open structure. The RuvB hexamer acts as an ATP-dependent pump, pulling dsDNA into and through the RuvAB complex. HJ branch migration allows RuvC to scan DNA until it finds its consensus sequence, where it cleaves and resolves the cruciform DNA. This Thermotoga petrophila (strain ATCC BAA-488 / DSM 13995 / JCM 10881 / RKU-1) protein is Holliday junction branch migration complex subunit RuvA.